An 807-amino-acid chain; its full sequence is Phenylalanine--tRNA ligase beta subunit (807 aa).

One can recognise a tRNA-binding domain in the interval 39 to 153; the sequence is SARAQGVVVG…SLPPNGSPVA (115 aa). Residues 407–491 form the B5 domain; sequence AEAGPVLLRR…RLVGFDRFGA (85 aa). Aspartate 469, aspartate 475, glutamate 478, and glutamate 479 together coordinate Mg(2+). Residues 713–806 enclose the FDX-ACB domain; it reads PTVPFSERDL…LSKQFQAELR (94 aa).

The protein belongs to the phenylalanyl-tRNA synthetase beta subunit family. Type 1 subfamily. Tetramer of two alpha and two beta subunits. The cofactor is Mg(2+).

The protein resides in the cytoplasm. The catalysed reaction is tRNA(Phe) + L-phenylalanine + ATP = L-phenylalanyl-tRNA(Phe) + AMP + diphosphate + H(+). This chain is Phenylalanine--tRNA ligase beta subunit, found in Synechococcus sp. (strain CC9605).